Reading from the N-terminus, the 88-residue chain is MANSAQARKRARQATKARAHNASLRSRLRTAIKAVRKAIVGGDKAAAQAVFRTSMSTIDSVADKKIIHKNKAARHKSRLSAAVKAMAA.

Residues methionine 1 to arginine 25 form a disordered region. Over residues alanine 7–alanine 19 the composition is skewed to basic residues.

Belongs to the bacterial ribosomal protein bS20 family.

Functionally, binds directly to 16S ribosomal RNA. The chain is Small ribosomal subunit protein bS20 from Azoarcus sp. (strain BH72).